A 190-amino-acid chain; its full sequence is Peptidyl-tRNA hydrolase (190 aa).

Tyr-14 lines the tRNA pocket. His-19 acts as the Proton acceptor in catalysis. 3 residues coordinate tRNA: Tyr-64, Asn-66, and Asn-112.

The protein belongs to the PTH family. Monomer.

The protein localises to the cytoplasm. It catalyses the reaction an N-acyl-L-alpha-aminoacyl-tRNA + H2O = an N-acyl-L-amino acid + a tRNA + H(+). Functionally, hydrolyzes ribosome-free peptidyl-tRNAs (with 1 or more amino acids incorporated), which drop off the ribosome during protein synthesis, or as a result of ribosome stalling. In terms of biological role, catalyzes the release of premature peptidyl moieties from peptidyl-tRNA molecules trapped in stalled 50S ribosomal subunits, and thus maintains levels of free tRNAs and 50S ribosomes. The sequence is that of Peptidyl-tRNA hydrolase from Chlorobium phaeobacteroides (strain DSM 266 / SMG 266 / 2430).